A 198-amino-acid chain; its full sequence is Sensory transduction protein RegX3 (198 aa).

Positions 1-87 (MVTDGPAALA…ELIARIRAVL (87 aa)) constitute a Response regulatory domain. 4-aspartylphosphate is present on Asp23. Residues 99–198 (DGVLESGPLR…VRGLGYKLES (100 aa)) constitute a DNA-binding region (ompR/PhoB-type).

Phosphorylated by SenX3.

Its function is as follows. Member of the two-component regulatory system SenX3/RegX3. The chain is Sensory transduction protein RegX3 (rgx3) from Mycobacterium leprae (strain TN).